Here is a 173-residue protein sequence, read N- to C-terminus: Photosystem I assembly protein Ycf3 (173 aa).

TPR repeat units lie at residues 35–68 (AFVY…EEDT), 72–105 (GYIL…NPRL), and 120–153 (GEKA…APNN).

It belongs to the Ycf3 family.

It is found in the cellular thylakoid membrane. In terms of biological role, essential for the assembly of the photosystem I (PSI) complex. May act as a chaperone-like factor to guide the assembly of the PSI subunits. In Nostoc sp. (strain PCC 7120 / SAG 25.82 / UTEX 2576), this protein is Photosystem I assembly protein Ycf3.